The primary structure comprises 353 residues: Photosystem II protein D1 (353 aa).

Thr-2 bears the N-acetylthreonine mark. Thr-2 bears the Phosphothreonine mark. A run of 3 helical transmembrane segments spans residues 29–46 (YIGW…TATS), 118–133 (HFLL…EWEL), and 142–156 (WIAV…AATA). His-118 provides a ligand contact to chlorophyll a. Tyr-126 lines the pheophytin a pocket. Residues Asp-170 and Glu-189 each contribute to the [CaMn4O5] cluster site. Residues 197–218 (FHMLGVAGVFGGSLFSAMHGSL) traverse the membrane as a helical segment. His-198 contacts chlorophyll a. A quinone-binding positions include His-215 and 264 to 265 (SF). His-215 contributes to the Fe cation binding site. His-272 is a binding site for Fe cation. Residues 274-288 (FLAAWPVVGIWFTAL) form a helical membrane-spanning segment. [CaMn4O5] cluster contacts are provided by His-332, Glu-333, Asp-342, and Ala-344. A propeptide spanning residues 345–353 (AIEAPSTNG) is cleaved from the precursor.

The protein belongs to the reaction center PufL/M/PsbA/D family. In terms of assembly, PSII is composed of 1 copy each of membrane proteins PsbA, PsbB, PsbC, PsbD, PsbE, PsbF, PsbH, PsbI, PsbJ, PsbK, PsbL, PsbM, PsbT, PsbX, PsbY, PsbZ, Psb30/Ycf12, at least 3 peripheral proteins of the oxygen-evolving complex and a large number of cofactors. It forms dimeric complexes. The D1/D2 heterodimer binds P680, chlorophylls that are the primary electron donor of PSII, and subsequent electron acceptors. It shares a non-heme iron and each subunit binds pheophytin, quinone, additional chlorophylls, carotenoids and lipids. D1 provides most of the ligands for the Mn4-Ca-O5 cluster of the oxygen-evolving complex (OEC). There is also a Cl(-1) ion associated with D1 and D2, which is required for oxygen evolution. The PSII complex binds additional chlorophylls, carotenoids and specific lipids. is required as a cofactor. Tyr-161 forms a radical intermediate that is referred to as redox-active TyrZ, YZ or Y-Z. In terms of processing, C-terminally processed by CTPA; processing is essential to allow assembly of the oxygen-evolving complex and thus photosynthetic growth.

The protein localises to the plastid. The protein resides in the chloroplast thylakoid membrane. The catalysed reaction is 2 a plastoquinone + 4 hnu + 2 H2O = 2 a plastoquinol + O2. In terms of biological role, photosystem II (PSII) is a light-driven water:plastoquinone oxidoreductase that uses light energy to abstract electrons from H(2)O, generating O(2) and a proton gradient subsequently used for ATP formation. It consists of a core antenna complex that captures photons, and an electron transfer chain that converts photonic excitation into a charge separation. The D1/D2 (PsbA/PsbD) reaction center heterodimer binds P680, the primary electron donor of PSII as well as several subsequent electron acceptors. This chain is Photosystem II protein D1, found in Gossypium barbadense (Sea Island cotton).